A 191-amino-acid polypeptide reads, in one-letter code: Shikimate kinase (191 aa).

14-19 provides a ligand contact to ATP; that stretch reads GSGKST. Position 18 (Ser-18) interacts with Mg(2+). The substrate site is built by Asp-36, Arg-60, and Gly-82. ATP is bound at residue Arg-120. Arg-147 provides a ligand contact to substrate.

It belongs to the shikimate kinase family. Monomer. The cofactor is Mg(2+).

Its subcellular location is the cytoplasm. The catalysed reaction is shikimate + ATP = 3-phosphoshikimate + ADP + H(+). Its pathway is metabolic intermediate biosynthesis; chorismate biosynthesis; chorismate from D-erythrose 4-phosphate and phosphoenolpyruvate: step 5/7. Its function is as follows. Catalyzes the specific phosphorylation of the 3-hydroxyl group of shikimic acid using ATP as a cosubstrate. The protein is Shikimate kinase of Chlorobaculum tepidum (strain ATCC 49652 / DSM 12025 / NBRC 103806 / TLS) (Chlorobium tepidum).